Consider the following 892-residue polypeptide: DNA replication licensing factor mcm6 (892 aa).

A phosphoserine mark is found at Ser-96 and Ser-98. In terms of domain architecture, MCM spans 426-633; the sequence is IYSRLTNSLA…VDRHLAKHIV (208 aa). 476 to 483 is an ATP binding site; the sequence is GDPSTSKS. Positions 608–611 match the Arginine finger motif; that stretch reads SRFD. The segment covering 748-758 has biased composition (acidic residues); the sequence is EDDAEAQELEN. Positions 748–774 are disordered; that stretch reads EDDAEAQELENDNTNTTNGNDNVSSEE. Over residues 759-769 the composition is skewed to low complexity; it reads DNTNTTNGNDN.

It belongs to the MCM family. As to quaternary structure, component of the mcm2-7 complex. The complex forms a toroidal hexameric ring with the proposed subunit order mcm2-mcm6-mcm4-mcm7-mcm3-mcm5. The heterodimers of mcm4/mcm6 and mcm3/mcm5 interact with mcm2 and mcm7. Interacts with sld3.

It localises to the nucleus. The enzyme catalyses ATP + H2O = ADP + phosphate + H(+). In terms of biological role, acts as a component of the mcm2-7 complex (mcm complex) which is the putative replicative helicase essential for 'once per cell cycle' DNA replication initiation and elongation in eukaryotic cells. The active ATPase sites in the mcm2-7 ring are formed through the interaction surfaces of two neighboring subunits such that a critical structure of a conserved arginine finger motif is provided in trans relative to the ATP-binding site of the Walker A box of the adjacent subunit. The six ATPase active sites, however, are likely to contribute differentially to the complex helicase activity. In Schizosaccharomyces pombe (strain 972 / ATCC 24843) (Fission yeast), this protein is DNA replication licensing factor mcm6 (mcm6).